A 186-amino-acid polypeptide reads, in one-letter code: Elongation factor P (186 aa).

This sequence belongs to the elongation factor P family.

It localises to the cytoplasm. Its pathway is protein biosynthesis; polypeptide chain elongation. In terms of biological role, involved in peptide bond synthesis. Stimulates efficient translation and peptide-bond synthesis on native or reconstituted 70S ribosomes in vitro. Probably functions indirectly by altering the affinity of the ribosome for aminoacyl-tRNA, thus increasing their reactivity as acceptors for peptidyl transferase. This chain is Elongation factor P, found in Streptococcus agalactiae serotype Ia (strain ATCC 27591 / A909 / CDC SS700).